The primary structure comprises 80 residues: Cortexin-3 (80 aa).

A helical transmembrane segment spans residues 28–48; that stretch reads TTFVFVILLFIFLGILIVRCF.

This sequence belongs to the cortexin family.

The protein resides in the membrane. The protein is Cortexin-3 (Ctxn3) of Mus musculus (Mouse).